Here is a 1598-residue protein sequence, read N- to C-terminus: Fatty acid synthase subunit alpha (1598 aa).

Positions 96–134 (RTQPHKSSAPQEPVPKAAPKAAPPVPVATAPLPEPGRQV) are disordered. The segment covering 104 to 115 (APQEPVPKAAPK) has biased composition (low complexity). The Carrier domain maps to 143 to 221 (DVPIQSRDVI…QIVSGSTSTT (79 aa)). Residue Ser181 is modified to O-(pantetheine 4'-phosphoryl)serine. Positions 543–784 (LKGKTVLLTG…LAALLVNPFA (242 aa)) are ketoreductase (KR) domain. The tract at residues 818–844 (KQDSTSTPTHQHLPSHHHVDEPEIGKP) is disordered. The span at 820–829 (DSTSTPTHQH) shows a compositional bias: polar residues. Residues 992–1524 (HEIVLTRDLA…QKGAQAIIVH (533 aa)) form the Ketosynthase family 3 (KS3) domain. Catalysis depends on Cys1175, which acts as the For beta-ketoacyl synthase activity. Residues 1280 to 1301 (ASDKTGRSVPSPGKGTLTNARE) are disordered. Catalysis depends on for beta-ketoacyl synthase activity residues His1409 and His1450.

It belongs to the thiolase-like superfamily. Fungal fatty acid synthetase subunit alpha family. Fatty acid synthase is composed of alpha and beta subunits.

The catalysed reaction is acetyl-CoA + n malonyl-CoA + 2n NADPH + 4n H(+) = a long-chain-acyl-CoA + n CoA + n CO2 + 2n NADP(+).. It catalyses the reaction a fatty acyl-[ACP] + malonyl-[ACP] + H(+) = a 3-oxoacyl-[ACP] + holo-[ACP] + CO2. The enzyme catalyses a (3R)-hydroxyacyl-[ACP] + NADP(+) = a 3-oxoacyl-[ACP] + NADPH + H(+). The protein operates within mycotoxin biosynthesis. In terms of biological role, fatty acid synthase subunit alpha; part of the gene cluster that mediates the biosynthesis of gramillins A and B, bicyclic lipopeptides that induce cell death in maize leaves but not in wheat leaves. The nonribosomal peptide synthetase GRA1 incorporates respectively a glutamic adic (Glu), a leucine (Leu), a serine (Ser), a hydroxyglutamine (HOGln), a 2-amino decanoic acid, and 2 cysteins (CysB and CysA). The biosynthesis of 2-amino decanoic acid incorporated in gramillins could be initiated by a fatty acid synthase composed of the alpha and beta subunits FGSG_00036 and FGSG_11656. The cytochrome P450 monooxygenase FGSG_15680 could hydroxylate the fatty acid chain. Subsequent oxidation to the ketone by the oxidoreductase FGSG_00048 and transamination by aminotransferase FGSG_00049 could form 2-amino-decanoic acid. On the other hand, FGSG_15680 could also be responsible for the HO-modified glutamine at the gamma-position. Whether hydroxylation occurs on the fully assembled product or on the Gln residue prior to assembly into the gramillins requires further proof. The thioredoxin FGSG_00043 could also be required for the disulfide-bond formation between CysA and CysB. The specific involvement of the remaining proteins from the cluster is more difficult to discern, but could have broader regulatory (FGSG_00040 and FGSG_11657) or enzymatic functions (FGSG_00044 and FGSG_00045). The final C-domain of GRA1 does not possess the expected sequence of a termination CT domain, often implicated in macrocyclization and release of a cyclopeptidein fungal NRPs; and the thioesterase FGSG_00047 may act in concert with the terminal C-domain of GRA1 to catalyze the formation of the macrocyclic anhydride and release of the products. In Gibberella zeae (strain ATCC MYA-4620 / CBS 123657 / FGSC 9075 / NRRL 31084 / PH-1) (Wheat head blight fungus), this protein is Fatty acid synthase subunit alpha.